Reading from the N-terminus, the 190-residue chain is Potassium-transporting ATPase KdpC subunit (190 aa).

Residues 13 to 33 (VGFLLLTLVCGVIYPGVVTII) form a helical membrane-spanning segment.

It belongs to the KdpC family. In terms of assembly, the system is composed of three essential subunits: KdpA, KdpB and KdpC.

It is found in the cell membrane. Part of the high-affinity ATP-driven potassium transport (or Kdp) system, which catalyzes the hydrolysis of ATP coupled with the electrogenic transport of potassium into the cytoplasm. This subunit acts as a catalytic chaperone that increases the ATP-binding affinity of the ATP-hydrolyzing subunit KdpB by the formation of a transient KdpB/KdpC/ATP ternary complex. In Listeria innocua serovar 6a (strain ATCC BAA-680 / CLIP 11262), this protein is Potassium-transporting ATPase KdpC subunit.